Here is a 552-residue protein sequence, read N- to C-terminus: CTP synthase (552 aa).

The interval 1 to 271 is amidoligase domain; sequence MASAASSKHL…DAFVVRRLGL (271 aa). Residue S18 participates in CTP binding. Residue S18 participates in UTP binding. Residues 19-24 and D76 contribute to the ATP site; that span reads SLGKGL. D76 and E145 together coordinate Mg(2+). Residues 152–154, 192–197, and K228 contribute to the CTP site; these read DIE and KTKPTQ. UTP-binding positions include 192 to 197 and K228; that span reads KTKPTQ. In terms of domain architecture, Glutamine amidotransferase type-1 spans 296-546; the sequence is TIALVGKYVD…IEAALKYSAG (251 aa). G359 contacts L-glutamine. The active-site Nucleophile; for glutamine hydrolysis is the C386. Residues 387-390, E410, and R472 contribute to the L-glutamine site; that span reads LGLQ. Catalysis depends on residues H519 and E521.

It belongs to the CTP synthase family. As to quaternary structure, homotetramer.

The enzyme catalyses UTP + L-glutamine + ATP + H2O = CTP + L-glutamate + ADP + phosphate + 2 H(+). The catalysed reaction is L-glutamine + H2O = L-glutamate + NH4(+). It carries out the reaction UTP + NH4(+) + ATP = CTP + ADP + phosphate + 2 H(+). It participates in pyrimidine metabolism; CTP biosynthesis via de novo pathway; CTP from UDP: step 2/2. With respect to regulation, allosterically activated by GTP, when glutamine is the substrate; GTP has no effect on the reaction when ammonia is the substrate. The allosteric effector GTP functions by stabilizing the protein conformation that binds the tetrahedral intermediate(s) formed during glutamine hydrolysis. Inhibited by the product CTP, via allosteric rather than competitive inhibition. Functionally, catalyzes the ATP-dependent amination of UTP to CTP with either L-glutamine or ammonia as the source of nitrogen. Regulates intracellular CTP levels through interactions with the four ribonucleotide triphosphates. This is CTP synthase from Thermobifida fusca (strain YX).